A 151-amino-acid polypeptide reads, in one-letter code: Deoxyuridine 5'-triphosphate nucleotidohydrolase (151 aa).

Residues 70-72, asparagine 83, 87-89, and lysine 97 each bind substrate; these read RSG and LID.

The protein belongs to the dUTPase family. It depends on Mg(2+) as a cofactor.

It carries out the reaction dUTP + H2O = dUMP + diphosphate + H(+). It functions in the pathway pyrimidine metabolism; dUMP biosynthesis; dUMP from dCTP (dUTP route): step 2/2. Its function is as follows. This enzyme is involved in nucleotide metabolism: it produces dUMP, the immediate precursor of thymidine nucleotides and it decreases the intracellular concentration of dUTP so that uracil cannot be incorporated into DNA. The sequence is that of Deoxyuridine 5'-triphosphate nucleotidohydrolase from Idiomarina loihiensis (strain ATCC BAA-735 / DSM 15497 / L2-TR).